The sequence spans 93 residues: Large ribosomal subunit protein uL23 (93 aa).

This sequence belongs to the universal ribosomal protein uL23 family. In terms of assembly, part of the 50S ribosomal subunit. Contacts protein L29, and trigger factor when it is bound to the ribosome.

Functionally, one of the early assembly proteins it binds 23S rRNA. One of the proteins that surrounds the polypeptide exit tunnel on the outside of the ribosome. Forms the main docking site for trigger factor binding to the ribosome. This Campylobacter jejuni subsp. doylei (strain ATCC BAA-1458 / RM4099 / 269.97) protein is Large ribosomal subunit protein uL23.